We begin with the raw amino-acid sequence, 393 residues long: MTIADRWLLPDGMDEVLPPQATRMEQLRRALLDLYDRWGYDLVIPPTVEFLDSLLTGTGTDLDLQTFKLTDQLSGRMMGASADVTPQVARMDAHSLKRSGPARLCYCTTVLRAKADKHQGGRSPTQVGVELFGHAGLDADIEVVRLALTGLEVAGAGEVHLALGHIGIYRALVHAAALSAESEQALFEAIERKAFNDVDALVARDVSDPALVDMLQALPRLYGGQEVLDQAREVFAGAPPAVMAALDELQALCRAVTDNHLRAEVYLDLAELRGYLYHTGMVFAAYVPGYGQALAKGGRYDDTGRAFGRARPATGFSMDLKLLASLEESGPRCDGIWAPADERAGLEDAIARLRASGERVIQALPGQRVGPREQRCDRQLVESNGEWRVEPLA.

This sequence belongs to the class-II aminoacyl-tRNA synthetase family. HisZ subfamily. In terms of assembly, heteromultimer composed of HisG and HisZ subunits.

It is found in the cytoplasm. Its pathway is amino-acid biosynthesis; L-histidine biosynthesis; L-histidine from 5-phospho-alpha-D-ribose 1-diphosphate: step 1/9. Functionally, required for the first step of histidine biosynthesis. May allow the feedback regulation of ATP phosphoribosyltransferase activity by histidine. The sequence is that of ATP phosphoribosyltransferase regulatory subunit from Chromohalobacter salexigens (strain ATCC BAA-138 / DSM 3043 / CIP 106854 / NCIMB 13768 / 1H11).